The sequence spans 137 residues: Endoribonuclease YbeY (137 aa).

Zn(2+)-binding residues include His-107, His-111, and Asp-117.

It belongs to the endoribonuclease YbeY family. It depends on Zn(2+) as a cofactor.

The protein localises to the cytoplasm. In terms of biological role, single strand-specific metallo-endoribonuclease involved in late-stage 70S ribosome quality control and in maturation of the 3' terminus of the 16S rRNA. The sequence is that of Endoribonuclease YbeY from Bacteroides thetaiotaomicron (strain ATCC 29148 / DSM 2079 / JCM 5827 / CCUG 10774 / NCTC 10582 / VPI-5482 / E50).